We begin with the raw amino-acid sequence, 221 residues long: Cytidylate kinase (221 aa).

Position 11–19 (11–19 (GPCGAGKST)) interacts with ATP.

This sequence belongs to the cytidylate kinase family. Type 1 subfamily.

The protein resides in the cytoplasm. It carries out the reaction CMP + ATP = CDP + ADP. The enzyme catalyses dCMP + ATP = dCDP + ADP. In Mycoplasmopsis agalactiae (strain NCTC 10123 / CIP 59.7 / PG2) (Mycoplasma agalactiae), this protein is Cytidylate kinase.